The following is a 232-amino-acid chain: Phosphatidylserine decarboxylase proenzyme (232 aa).

The Schiff-base intermediate with substrate; via pyruvic acid role is filled by Ser190. Ser190 is subject to Pyruvic acid (Ser); by autocatalysis.

Belongs to the phosphatidylserine decarboxylase family. PSD-A subfamily. As to quaternary structure, heterodimer of a large membrane-associated beta subunit and a small pyruvoyl-containing alpha subunit. Pyruvate serves as cofactor. In terms of processing, is synthesized initially as an inactive proenzyme. Formation of the active enzyme involves a self-maturation process in which the active site pyruvoyl group is generated from an internal serine residue via an autocatalytic post-translational modification. Two non-identical subunits are generated from the proenzyme in this reaction, and the pyruvate is formed at the N-terminus of the alpha chain, which is derived from the carboxyl end of the proenzyme. The post-translation cleavage follows an unusual pathway, termed non-hydrolytic serinolysis, in which the side chain hydroxyl group of the serine supplies its oxygen atom to form the C-terminus of the beta chain, while the remainder of the serine residue undergoes an oxidative deamination to produce ammonia and the pyruvoyl prosthetic group on the alpha chain.

Its subcellular location is the cell membrane. It catalyses the reaction a 1,2-diacyl-sn-glycero-3-phospho-L-serine + H(+) = a 1,2-diacyl-sn-glycero-3-phosphoethanolamine + CO2. It functions in the pathway phospholipid metabolism; phosphatidylethanolamine biosynthesis; phosphatidylethanolamine from CDP-diacylglycerol: step 2/2. Functionally, catalyzes the formation of phosphatidylethanolamine (PtdEtn) from phosphatidylserine (PtdSer). This Rhodopseudomonas palustris (strain HaA2) protein is Phosphatidylserine decarboxylase proenzyme.